The following is a 280-amino-acid chain: Ribosomal RNA small subunit methyltransferase A (280 aa).

Residues Asn-28, Leu-30, Gly-55, Glu-77, Asp-103, and Asn-122 each coordinate S-adenosyl-L-methionine.

The protein belongs to the class I-like SAM-binding methyltransferase superfamily. rRNA adenine N(6)-methyltransferase family. RsmA subfamily.

It localises to the cytoplasm. It carries out the reaction adenosine(1518)/adenosine(1519) in 16S rRNA + 4 S-adenosyl-L-methionine = N(6)-dimethyladenosine(1518)/N(6)-dimethyladenosine(1519) in 16S rRNA + 4 S-adenosyl-L-homocysteine + 4 H(+). Specifically dimethylates two adjacent adenosines (A1518 and A1519) in the loop of a conserved hairpin near the 3'-end of 16S rRNA in the 30S particle. May play a critical role in biogenesis of 30S subunits. In Roseobacter denitrificans (strain ATCC 33942 / OCh 114) (Erythrobacter sp. (strain OCh 114)), this protein is Ribosomal RNA small subunit methyltransferase A.